A 428-amino-acid chain; its full sequence is Proteinase-activated receptor 1 (428 aa).

Residues 1–21 (MGPQRLLLVAAGLSLCGPLLS) form the signal peptide. A propeptide spans 22 to 41 (SRVPVRQPESEMTDATVNPR) (removed for receptor activation). Topologically, residues 42 to 105 (SFFLRNPGEN…SGYLTSPWLR (64 aa)) are extracellular. 2 N-linked (GlcNAc...) asparagine glycosylation sites follow: asparagine 65 and asparagine 78. The helical transmembrane segment at 106–131 (LFIPSVYTFVFVVSLPLNILAIAVFV) threads the bilayer. The Cytoplasmic segment spans residues 132–140 (LKMKVKKPA). The helical transmembrane segment at 141–160 (VVYMLHLAMADVLFVSVLPL) threads the bilayer. Residues 161–179 (KISYYFSGSDWQFGSGMCR) lie on the Extracellular side of the membrane. Cysteines 178 and 257 form a disulfide. Residues 180–201 (FATAAFYCNMYASIMLMTVISI) traverse the membrane as a helical segment. The Cytoplasmic portion of the chain corresponds to 202–221 (DRFLAVVYPIQSLSWRTLGR). Residues 222 to 242 (ANFTCLVIWVMAIMGVVPLLL) form a helical membrane-spanning segment. Over 243–271 (KEQTTRVPGLNITTCHDVLNETLLQGFYS) the chain is Extracellular. Residues asparagine 253 and asparagine 262 are each glycosylated (N-linked (GlcNAc...) asparagine). Residues 272 to 291 (YYFSAFSAVFFLVPLIISTI) form a helical membrane-spanning segment. Topologically, residues 292–314 (CYMSIIRCLSSSSVANRSKKSRA) are cytoplasmic. Residues 315–337 (LFLSAAVFCVFIVCFGPTNVLLI) traverse the membrane as a helical segment. The Extracellular segment spans residues 338–352 (MHYLLLSDSPATEKA). The helical transmembrane segment at 353 to 377 (YFAYLLCVCVSSVSCCIDPLIYYYA) threads the bilayer. Over 378–428 (SSECQRHLYGILCCKESSDPNSYNSTGQLMPSKMDTCSSHLNNSIYKKLLA) the chain is Cytoplasmic. Serine 421 bears the Phosphoserine mark.

The protein belongs to the G-protein coupled receptor 1 family. In terms of processing, proteolytic cleavage by thrombin generates a new N-terminus that functions as a tethered ligand. Also proteolytically cleaved by cathepsin CTSG. Phosphorylated in the C-terminal tail; probably mediating desensitization prior to the uncoupling and internalization of the receptor.

The protein localises to the cell membrane. Its function is as follows. High affinity receptor that binds the activated thrombin, leading to calcium release from intracellular stores. The thrombin-activated receptor signaling pathway is mediated through PTX-insensitive G proteins, activation of phospholipase C resulting in the production of 1D-myo-inositol 1,4,5-trisphosphate (InsP3) which binds to InsP3 receptors causing calcium release from the stores. In astrocytes, the calcium released into the cytosol allows the Ca(2+)-dependent release of L-glutamate into the synaptic cleft through BEST1, that targets the neuronal postsynaptic GRIN2A/NMDAR receptor resulting in the synaptic plasticity regulation. May play a role in platelets activation and in vascular development. Mediates up-regulation of pro-inflammatory cytokines, such as MCP-1/CCL2 and IL6, triggered by coagulation factor Xa (F10) in cardiac fibroblasts and umbilical vein endothelial cells. The chain is Proteinase-activated receptor 1 from Cricetulus longicaudatus (Long-tailed dwarf hamster).